The sequence spans 327 residues: Malate dehydrogenase (327 aa).

11-17 (GAAGQIS) is a binding site for NAD(+). Substrate-binding residues include arginine 92 and arginine 98. NAD(+)-binding positions include asparagine 105, glutamine 112, and 129–131 (VGN). Residues asparagine 131 and arginine 162 each contribute to the substrate site. Histidine 187 acts as the Proton acceptor in catalysis.

It belongs to the LDH/MDH superfamily. MDH type 2 family.

The catalysed reaction is (S)-malate + NAD(+) = oxaloacetate + NADH + H(+). Its function is as follows. Catalyzes the reversible oxidation of malate to oxaloacetate. This is Malate dehydrogenase from Teredinibacter turnerae (strain ATCC 39867 / T7901).